Reading from the N-terminus, the 126-residue chain is Large ribosomal subunit protein bL12 (126 aa).

Basic and acidic residues predominate over residues Glu107–Leu116. The tract at residues Glu107–Lys126 is disordered.

It belongs to the bacterial ribosomal protein bL12 family. As to quaternary structure, homodimer. Part of the ribosomal stalk of the 50S ribosomal subunit. Forms a multimeric L10(L12)X complex, where L10 forms an elongated spine to which 2 to 4 L12 dimers bind in a sequential fashion. Binds GTP-bound translation factors.

Its function is as follows. Forms part of the ribosomal stalk which helps the ribosome interact with GTP-bound translation factors. Is thus essential for accurate translation. This is Large ribosomal subunit protein bL12 from Bifidobacterium adolescentis (strain ATCC 15703 / DSM 20083 / NCTC 11814 / E194a).